A 1273-amino-acid polypeptide reads, in one-letter code: Ras-specific guanine nucleotide-releasing factor 1 (1273 aa).

The region spanning 22 to 129 is the PH 1 domain; it reads DGTRKGYLSK…WVAAIAHASY (108 aa). Positions 204-229 constitute an IQ domain; sequence KKIKKVQSFLRGWLCRRKWKTIIQDY. Positions 240–426 constitute a DH domain; sequence KRNQVVFSML…EELSRIMHDE (187 aa). The PH 2 domain maps to 467 to 584; the sequence is PMSEKGKITR…WTSDISQCVD (118 aa). 2 positions are modified to phosphoserine; by PLK2: S577 and S626. An N-terminal Ras-GEF domain is found at 644-761; that stretch reads KVLQIRYASV…SRRRKLSLNI (118 aa). Residues 724 to 754 form a disordered region; the sequence is YGEPPKSPRATRKFSSPPPLSITKTSSPSRR. S758 carries the phosphoserine modification. Residues S779 and S800 each carry the phosphoserine; by PLK2 modification. A disordered region spans residues 809–874; that stretch reads TNKIPDEGDT…PKSVKNKNSS (66 aa). A compositionally biased stretch (acidic residues) spans 842–854; the sequence is SDIDQNQSDDGDT. Over residues 855 to 867 the composition is skewed to low complexity; the sequence is ETSPTKSPTTPKS. Residues 1038–1270 enclose the Ras-GEF domain; sequence SALEIAEQLT…YESSLRIEPK (233 aa).

Homooligomer and heterooligomer with RASGRF2. Interacts with USP8, thereby regulating its stability. In terms of processing, phosphorylated by PLK2, leading to ubiquitination and degradation by the proteasome. Ubiquitinated and degraded following phosphorylation by PLK2. Post-translationally, phosphorylated by SRC and LCK. Phosphorylation by LCK increases its capacity to stimulate the GDP/GTP exchange on Ras, whereas its phosphorylation by SRC seems not to have an effect on stimulation activity.

Promotes the exchange of Ras-bound GDP by GTP. This chain is Ras-specific guanine nucleotide-releasing factor 1 (RASGRF1), found in Homo sapiens (Human).